Consider the following 600-residue polypeptide: Glutamine--fructose-6-phosphate aminotransferase [isomerizing] (600 aa).

The active-site Nucleophile; for GATase activity is the cysteine 2. One can recognise a Glutamine amidotransferase type-2 domain in the interval 2 to 217 (CGIVGFIGEQ…DKEIVIVMKE (216 aa)). SIS domains are found at residues 283-422 (IRNA…AKGE) and 452-590 (LAKQ…VDKP). Residue lysine 595 is the For Fru-6P isomerization activity of the active site.

In terms of assembly, homodimer.

The protein resides in the cytoplasm. It catalyses the reaction D-fructose 6-phosphate + L-glutamine = D-glucosamine 6-phosphate + L-glutamate. Functionally, catalyzes the first step in hexosamine metabolism, converting fructose-6P into glucosamine-6P using glutamine as a nitrogen source. In Bacillus thuringiensis subsp. konkukian (strain 97-27), this protein is Glutamine--fructose-6-phosphate aminotransferase [isomerizing].